Reading from the N-terminus, the 91-residue chain is MNIKLFCFLSILISLTGLSLSGDDGNYPIDANGNRYSCGKLGENEFCLKVCKLHGVKRGYCYFFKCYCELLKDKDIQFFDAYKTYCKNSRI.

The first 21 residues, 1–21 (MNIKLFCFLSILISLTGLSLS), serve as a signal peptide directing secretion. The LCN-type CS-alpha/beta domain occupies 23-87 (DDGNYPIDAN…FFDAYKTYCK (65 aa)). 3 cysteine pairs are disulfide-bonded: C38–C61, C47–C66, and C51–C68.

The protein belongs to the long (3 C-C) scorpion toxin superfamily. Heterodimer of this alpha chain and a beta chain (AC D9U2A2). In terms of tissue distribution, expressed by the venom gland.

The protein resides in the secreted. The heterodimer LVP1 induces lipolysis in rat adipocytes. Induction of lipolysis by LVP1 appears to be mediated through the beta-2 adrenergic receptor pathway (ADRB2). This chain is Lipolysis-activating peptide 1-alpha chain, found in Lychas mucronatus (Chinese swimming scorpion).